Reading from the N-terminus, the 49-residue chain is Osteocalcin (49 aa).

The Gla domain maps to 1-47 (YLYQWLGAPAPYPDPLEPKREVCELNPDCDELADHIGFQEAYRRFYG). Pro9 carries the post-translational modification 4-hydroxyproline. Ca(2+) is bound by residues Glu17, Glu21, Glu24, and Asp30. Glu17, Glu21, and Glu24 each carry 4-carboxyglutamate. Residues Cys23 and Cys29 are joined by a disulfide bond.

This sequence belongs to the osteocalcin/matrix Gla protein family. Gamma-carboxyglutamate residues are formed by vitamin K dependent carboxylation by GGCX. These residues are essential for the binding of calcium. Decarboxylation promotes the hormone activity.

Its subcellular location is the secreted. The carboxylated form is one of the main organic components of the bone matrix, which constitutes 1-2% of the total bone protein: it acts as a negative regulator of bone formation and is required to limit bone formation without impairing bone resorption or mineralization. The carboxylated form binds strongly to apatite and calcium. In terms of biological role, the uncarboxylated form acts as a hormone secreted by osteoblasts, which regulates different cellular processes, such as energy metabolism, male fertility and brain development. Regulates of energy metabolism by acting as a hormone favoring pancreatic beta-cell proliferation, insulin secretion and sensitivity and energy expenditure. Uncarboxylated osteocalcin hormone also promotes testosterone production in the testes: acts as a ligand for G protein-coupled receptor GPRC6A at the surface of Leydig cells, initiating a signaling response that promotes the expression of enzymes required for testosterone synthesis in a CREB-dependent manner. Also acts as a regulator of brain development: osteocalcin hormone crosses the blood-brain barrier and acts as a ligand for GPR158 on neurons, initiating a signaling response that prevents neuronal apoptosis in the hippocampus, favors the synthesis of all monoamine neurotransmitters and inhibits that of gamma-aminobutyric acid (GABA). Osteocalcin also crosses the placenta during pregnancy and maternal osteocalcin is required for fetal brain development. The polypeptide is Osteocalcin (BGLAP) (Macaca fascicularis (Crab-eating macaque)).